We begin with the raw amino-acid sequence, 485 residues long: Adenosylhomocysteinase (485 aa).

Substrate-binding residues include T60, D146, and E208. 209-211 contributes to the NAD(+) binding site; that stretch reads TTT. Substrate-binding residues include K238 and D242. NAD(+)-binding positions include N243, 272–277, E295, N330, 351–353, and N399; these read GYGDVG and IGH.

It belongs to the adenosylhomocysteinase family. It depends on NAD(+) as a cofactor.

Its subcellular location is the cytoplasm. It carries out the reaction S-adenosyl-L-homocysteine + H2O = L-homocysteine + adenosine. The protein operates within amino-acid biosynthesis; L-homocysteine biosynthesis; L-homocysteine from S-adenosyl-L-homocysteine: step 1/1. In terms of biological role, may play a key role in the regulation of the intracellular concentration of adenosylhomocysteine. The sequence is that of Adenosylhomocysteinase from Streptomyces avermitilis (strain ATCC 31267 / DSM 46492 / JCM 5070 / NBRC 14893 / NCIMB 12804 / NRRL 8165 / MA-4680).